We begin with the raw amino-acid sequence, 385 residues long: Probable di-N-acetylchitobiase 2 (385 aa).

A signal peptide spans 1-15 (MRIILLLFLIVFVVA). A GH18 domain is found at 16-377 (QSSSSSSSSG…DALASFFPQS (362 aa)). 2 N-linked (GlcNAc...) asparagine glycosylation sites follow: N51 and N101. E129 acts as the Proton donor in catalysis. Residues N223, N272, and N296 are each glycosylated (N-linked (GlcNAc...) asparagine).

It belongs to the glycosyl hydrolase 18 family.

It localises to the lysosome. Functionally, involved in the degradation of asparagine-linked glycoproteins. May hydrolyze of N-acetyl-beta-D-glucosamine (1-4)N-acetylglucosamine chitobiose core from the reducing end of the bond. This Dictyostelium discoideum (Social amoeba) protein is Probable di-N-acetylchitobiase 2 (ctbs2).